A 1082-amino-acid chain; its full sequence is uncharacterized protein (1082 aa).

A PNPLA domain is found at 50-319 (TTMTGGVSLA…LDNRPIGVLF (270 aa)). A GXSXG motif is present at residues 120 to 124 (GTSAG). The active-site Nucleophile is serine 122. Aspartate 306 (proton acceptor) is an active-site residue. A DGA/G motif is present at residues 306 to 308 (DGG). A run of 4 helical transmembrane segments spans residues 959 to 979 (IARS…AAAI), 982 to 1002 (VTVF…LVVL), 1012 to 1032 (LFAL…TPVV), and 1057 to 1077 (WWHP…IAAA).

Its subcellular location is the cell membrane. This is an uncharacterized protein from Mycobacterium tuberculosis (strain ATCC 25618 / H37Rv).